Consider the following 463-residue polypeptide: Argininosuccinate lyase (463 aa).

Belongs to the lyase 1 family. Argininosuccinate lyase subfamily.

It localises to the cytoplasm. The catalysed reaction is 2-(N(omega)-L-arginino)succinate = fumarate + L-arginine. Its pathway is amino-acid biosynthesis; L-arginine biosynthesis; L-arginine from L-ornithine and carbamoyl phosphate: step 3/3. This Ruegeria pomeroyi (strain ATCC 700808 / DSM 15171 / DSS-3) (Silicibacter pomeroyi) protein is Argininosuccinate lyase.